Reading from the N-terminus, the 304-residue chain is UDP-3-O-acyl-N-acetylglucosamine deacetylase (304 aa).

The Zn(2+) site is built by H78, H237, and D241. H264 serves as the catalytic Proton donor.

This sequence belongs to the LpxC family. Requires Zn(2+) as cofactor.

The catalysed reaction is a UDP-3-O-[(3R)-3-hydroxyacyl]-N-acetyl-alpha-D-glucosamine + H2O = a UDP-3-O-[(3R)-3-hydroxyacyl]-alpha-D-glucosamine + acetate. The protein operates within glycolipid biosynthesis; lipid IV(A) biosynthesis; lipid IV(A) from (3R)-3-hydroxytetradecanoyl-[acyl-carrier-protein] and UDP-N-acetyl-alpha-D-glucosamine: step 2/6. Catalyzes the hydrolysis of UDP-3-O-myristoyl-N-acetylglucosamine to form UDP-3-O-myristoylglucosamine and acetate, the committed step in lipid A biosynthesis. This chain is UDP-3-O-acyl-N-acetylglucosamine deacetylase, found in Xylella fastidiosa (strain Temecula1 / ATCC 700964).